Reading from the N-terminus, the 409-residue chain is Probable sodium/metabolite cotransporter BASS6, chloroplastic (409 aa).

Residues 1–49 (MSVITTPIETLHLKSTLRLLPRAVYRSQRIQVFPPNIFSNTSLSSPLRI) constitute a chloroplast transit peptide. 9 helical membrane passes run 100–120 (ILPHVVLASTILALIYPPSFT), 121–141 (WFTSRYFVPALGFLMFAVGIN), 170–190 (VLGFIFGLAAVSLFQLPTPIG), 191–211 (AGIMLVSCVSGAQLSNYATFL), 221–241 (IVMTSLSTATAVLVTPMLSLL), 253–273 (GMISSILQVVIAPIAAGLLLN), 285–305 (PFLPILSVLDTACCVGAPLAL), 316–336 (ATILLLVTMFHLSAFLAGYFL), and 381–401 (IPPAISTVVMSLMGFTLVLIW).

It belongs to the bile acid:sodium symporter (BASS) (TC 2.A.28) family.

It localises to the membrane. It is found in the plastid. The protein localises to the chloroplast envelope. In terms of biological role, may function as sodium-coupled metabolite transporter across the chloroplast envelope. This is Probable sodium/metabolite cotransporter BASS6, chloroplastic (BASS6) from Arabidopsis thaliana (Mouse-ear cress).